Here is a 351-residue protein sequence, read N- to C-terminus: Protein arginine N-methyltransferase 1-B (351 aa).

An SAM-dependent MTase PRMT-type domain is found at 30-331 (KDYYFDSYAH…KNNRDLDFTV (302 aa)). The S-adenosyl-L-methionine site is built by His43, Arg52, Gly76, Glu98, and Glu127. Active-site residues include Glu142 and Glu151.

Belongs to the class I-like SAM-binding methyltransferase superfamily. Protein arginine N-methyltransferase family. In terms of assembly, homodimer. Homooctamer; individual homodimers associates to form a homooctamer and homooligomerization is required for proper localization to the cell membrane. Individual homodimers can associate to form a homohexamer. Component of a complex with lsm14a/rap55a. Interacts with cirbp. In terms of tissue distribution, from the onset of gastrulation, expressed in dorsal mesoderm, and in dorsal and ventral ectoderm. At the neurula and tail bud stages, expression is restricted to the neuroectoderm, with highest expression in the anterior neural plate.

It is found in the nucleus. The protein localises to the nucleoplasm. The protein resides in the cytoplasm. It localises to the cytosol. The enzyme catalyses L-arginyl-[protein] + 2 S-adenosyl-L-methionine = N(omega),N(omega)-dimethyl-L-arginyl-[protein] + 2 S-adenosyl-L-homocysteine + 2 H(+). It carries out the reaction L-arginyl-[protein] + S-adenosyl-L-methionine = N(omega)-methyl-L-arginyl-[protein] + S-adenosyl-L-homocysteine + H(+). It catalyses the reaction N(omega)-methyl-L-arginyl-[protein] + S-adenosyl-L-methionine = N(omega),N(omega)-dimethyl-L-arginyl-[protein] + S-adenosyl-L-homocysteine + H(+). Arginine methyltransferase that methylates (mono and asymmetric dimethylation) the guanidino nitrogens of arginyl residues present in target proteins. Constitutes the main enzyme that mediates monomethylation and asymmetric dimethylation of histone H4 'Arg-4' (H4R3me1 and H4R3me2a, respectively), a specific tag for epigenetic transcriptional activation. Methylates ilf3 to regulate its DNA-binding activity. Required for neural induction, playing a key role in the control of epidermal versus neural cell fate choice. This chain is Protein arginine N-methyltransferase 1-B (prmt1-b), found in Xenopus laevis (African clawed frog).